The primary structure comprises 106 residues: UPF0060 membrane protein Bxeno_B1021 (106 aa).

Helical transmembrane passes span 2 to 22, 30 to 50, 58 to 78, and 82 to 102; these read KTFL…YLPW, SIWL…LLTL, VYAA…WCVD, and PTLW…IIAF.

Belongs to the UPF0060 family.

It is found in the cell inner membrane. This chain is UPF0060 membrane protein Bxeno_B1021, found in Paraburkholderia xenovorans (strain LB400).